Here is an 86-residue protein sequence, read N- to C-terminus: Elicitor peptide 5 (86 aa).

Residues 1–59 (MQQERDHKRDCCKLMPQTVKAFFKCLRFRRSSSSSSDMVKARARNEEKEEPSSIETSTR) constitute a propeptide that is removed on maturation. A disordered region spans residues 31 to 86 (SSSSSSDMVKARARNEEKEEPSSIETSTRSLNVMRKGIRKQPVSSGKRGGVNDYDM). The segment covering 39 to 51 (VKARARNEEKEEP) has biased composition (basic and acidic residues).

It belongs to the brassicaceae elicitor peptide family.

Functionally, elicitor of plant defense. This Arabidopsis thaliana (Mouse-ear cress) protein is Elicitor peptide 5 (PEP5).